Here is a 456-residue protein sequence, read N- to C-terminus: tRNA modification GTPase MnmE (456 aa).

The (6S)-5-formyl-5,6,7,8-tetrahydrofolate site is built by arginine 24, glutamate 81, and lysine 120. One can recognise a TrmE-type G domain in the interval 216-379 (GMTVVIAGRP…LREHLKACMG (164 aa)). Asparagine 226 serves as a coordination point for K(+). GTP contacts are provided by residues 226-231 (NAGKSS), 245-251 (TEIAGTT), 270-273 (DTAG), 335-338 (NKAD), and 359-361 (SAR). Serine 230 contributes to the Mg(2+) binding site. K(+) is bound by residues threonine 245, isoleucine 247, and threonine 250. A Mg(2+)-binding site is contributed by threonine 251. Lysine 456 contacts (6S)-5-formyl-5,6,7,8-tetrahydrofolate.

This sequence belongs to the TRAFAC class TrmE-Era-EngA-EngB-Septin-like GTPase superfamily. TrmE GTPase family. Homodimer. Heterotetramer of two MnmE and two MnmG subunits. K(+) is required as a cofactor.

It localises to the cytoplasm. Functionally, exhibits a very high intrinsic GTPase hydrolysis rate. Involved in the addition of a carboxymethylaminomethyl (cmnm) group at the wobble position (U34) of certain tRNAs, forming tRNA-cmnm(5)s(2)U34. The polypeptide is tRNA modification GTPase MnmE (Pseudomonas savastanoi pv. phaseolicola (strain 1448A / Race 6) (Pseudomonas syringae pv. phaseolicola (strain 1448A / Race 6))).